We begin with the raw amino-acid sequence, 160 residues long: MGDVIVSISDFRVSNNVGDILVTYALGSCIAVAIYDPKVKVGGLLHYMLPDSSLDVDKAKTTPGMFADTGIPLLFKACYSLGAQKKSMIVKVAGGASILDDTNFFRIGQKNIMMARKMFWKNNVLINGEDTGSNCNRTVRLEIKTGKVFVKSSGGPLREL.

It belongs to the CheD family.

The enzyme catalyses L-glutaminyl-[protein] + H2O = L-glutamyl-[protein] + NH4(+). Its function is as follows. Probably deamidates glutamine residues to glutamate on methyl-accepting chemotaxis receptors (MCPs), playing an important role in chemotaxis. This Syntrophus aciditrophicus (strain SB) protein is Probable chemoreceptor glutamine deamidase CheD 1.